Here is a 412-residue protein sequence, read N- to C-terminus: Tyrosine--tRNA ligase (412 aa).

Y41 lines the L-tyrosine pocket. Residues 46–55 (ATADSLHVGH) carry the 'HIGH' region motif. 2 residues coordinate L-tyrosine: Y174 and Q178. The 'KMSKS' region motif lies at 234 to 238 (KMGKS). K237 is a binding site for ATP. The 64-residue stretch at 348 to 411 (LSLTDLLLEH…KKQHLHLRLE (64 aa)) folds into the S4 RNA-binding domain.

This sequence belongs to the class-I aminoacyl-tRNA synthetase family. TyrS type 1 subfamily. As to quaternary structure, homodimer.

The protein localises to the cytoplasm. It catalyses the reaction tRNA(Tyr) + L-tyrosine + ATP = L-tyrosyl-tRNA(Tyr) + AMP + diphosphate + H(+). Functionally, catalyzes the attachment of tyrosine to tRNA(Tyr) in a two-step reaction: tyrosine is first activated by ATP to form Tyr-AMP and then transferred to the acceptor end of tRNA(Tyr). This Pseudomonas aeruginosa (strain LESB58) protein is Tyrosine--tRNA ligase.